The primary structure comprises 107 residues: UPF0145 protein ETA_21660 (107 aa).

The protein belongs to the UPF0145 family.

The chain is UPF0145 protein ETA_21660 from Erwinia tasmaniensis (strain DSM 17950 / CFBP 7177 / CIP 109463 / NCPPB 4357 / Et1/99).